The sequence spans 194 residues: Probable thymidylate kinase (194 aa).

7–14 (GIDGSGKT) contributes to the ATP binding site.

Belongs to the thymidylate kinase family.

It catalyses the reaction dTMP + ATP = dTDP + ADP. The chain is Probable thymidylate kinase (tmk) from Methanothermobacter thermautotrophicus (strain ATCC 29096 / DSM 1053 / JCM 10044 / NBRC 100330 / Delta H) (Methanobacterium thermoautotrophicum).